Consider the following 800-residue polypeptide: MSEIIQDLSLEDVLGDRFGRYSKYIIQERALPDVRDGLKPVQRRILYAMYSSGNTHDKNFRKSAKTVGDVIGQYHPHGDSSVYEAMVRLSQDWKLRHVLIEMHGNNGSIDNDPPAAMRYTEAKLSLLAEELLRDINKETVSFIPNYDDTTLEPMVLPSRFPNLLVNGSTGISAGYATDIPPHNLAEVIQATLKYIDNPDITVNQLMKYIKGPDFPTGGIIQGIDGIKKAYESGKGRIIVRSKVEEETLRNGRKQLIITEIPYEVNKSSLVKRIDELRADKKVDGIVEVRDETDRTGLRIAIELKKDVNSESIKNYLYKNSDLQISYNFNMVAISDGRPKLMGIRQIIDSYLNHQIEVVANRTKFELDNAEKRMHIVEGLIKALSILDKVIELIRSSKNKCDAKENLIEVYEFTEEQAEAIVMLQLYRLTNTDIVALEGEHKELEALIKQLRHILDNHDALLNVIKEELNEIKKKFKSERLSLIEAEIEEIKIDKEVMVPSEEVILSMTRHGYIKRTSIRSFNASGVEDIGLKDGDSLLKHQEVNTQDTVLVFTNKGRYLFIPVHKLADIRWKELGQHVSQIVPIEEDEVVINVFNEKDFNTDAFYVFATQNGMIKKSTVPLFKTTRFNKPLIATKVKENDDLISVMRFEKDQLITVITNKGMSLTYNTSELSDTGLRAAGVKSINLKAEDFVVMTEGVSENDTILMATQRGSLKRISFKILQVAKRAQRGITLLKELKKNPHRIVAAHVVTGEHSQYTLYSKSNEEHGLINDIHKSEQYTNGSFIVDTDDFGEVIDMYIS.

One can recognise a Topo IIA-type catalytic domain in the interval 31–495 (LPDVRDGLKP…EIEEIKIDKE (465 aa)). Y119 serves as the catalytic O-(5'-phospho-DNA)-tyrosine intermediate.

Belongs to the type II topoisomerase GyrA/ParC subunit family. ParC type 2 subfamily. As to quaternary structure, heterotetramer composed of ParC and ParE.

The protein localises to the cell membrane. It catalyses the reaction ATP-dependent breakage, passage and rejoining of double-stranded DNA.. Topoisomerase IV is essential for chromosome segregation. It relaxes supercoiled DNA. Performs the decatenation events required during the replication of a circular DNA molecule. The polypeptide is DNA topoisomerase 4 subunit A (Staphylococcus aureus (strain MW2)).